A 928-amino-acid chain; its full sequence is Mitogen-activated protein kinase kinase kinase dlk-1 (928 aa).

The tract at residues 1–72 (MTSTTMVTTL…GQKEGSPDPK (72 aa)) is disordered. A compositionally biased stretch (polar residues) spans 42 to 52 (LVTQSAPNTPI). Positions 53-69 (QHREQANAEFGQKEGSP) are enriched in basic and acidic residues. The 243-residue stretch at 135–377 (ISELEWLGSG…FSHIRQHWEI (243 aa)) folds into the Protein kinase domain. ATP is bound by residues 141 to 149 (LGSGSQGAV) and lysine 162. The active-site Proton acceptor is the aspartate 246. The tract at residues 459 to 480 (LQGCFTELKLKESELAEWEKDL) is leucine-zipper. 3 disordered regions span residues 483 to 575 (REQW…DAIR), 644 to 696 (RRVS…PSRN), and 802 to 845 (ENAN…SMES). Positions 509-519 (GYDDMSSDEDV) are enriched in acidic residues. Over residues 530-557 (SNTSSSSGVQSSPFSRQSSSRSSAGQQT) the composition is skewed to low complexity. The tract at residues 605-814 (SAGAGSCTAI…NDVDLTSSMD (210 aa)) is important for interaction between isoform a and isoform c. Over residues 647–656 (STSVNKSTAV) the composition is skewed to polar residues. Low complexity predominate over residues 677-695 (SCSSPRSSSKLNRSSYPSR). Positions 823–833 (ADVESSEEDEG) are enriched in acidic residues. Phosphoserine is present on residues serine 874 and serine 878. An SDGLSD hexapeptide motif is present at residues 874–879 (SDGLSD).

This sequence belongs to the protein kinase superfamily. STE Ser/Thr protein kinase family. MAP kinase kinase kinase subfamily. In terms of assembly, homooligomer (via leucine zipper domain and hexapeptide motif). Isoform a (via leucine zipper domain) forms a heterooligomer with isoform c (via leucine zipper domain). Isoform c does not self-associate. Requires Mg(2+) as cofactor. Ubiquitinated by rpm-1. Negatively regulated by ubiquitination by fsn-1 bound rpm-1, followed by degradation. In terms of processing, phosphorylation at Ser-874 and/or at Ser-878 abolishes interaction with isoform c and promotes binding to isoform a kinase domain (likely in trans) resulting in isoform a self-association and activation. As to expression, expressed in nerve ring, nerve cord, neurons, and pharynx.

The protein localises to the synapse. The protein resides in the cytoplasm. Its subcellular location is the cell projection. It localises to the axon. It is found in the dendrite. The protein localises to the cilium. The catalysed reaction is L-seryl-[protein] + ATP = O-phospho-L-seryl-[protein] + ADP + H(+). It carries out the reaction L-threonyl-[protein] + ATP = O-phospho-L-threonyl-[protein] + ADP + H(+). Its activity is regulated as follows. Inactive when associated with isoform c. Dissociation from isoform c, which is dependent on the phosphorylation of the C-terminal hexapeptide, results in self-association and activation. Transient increase in Ca(2+) levels caused by axonal injury or synaptic activity triggers the dissociation of isoform a from isoform c; the dissociation may be influenced by the phosphorylation status of the C-terminal hexapeptide. In terms of biological role, component of a MAP kinase pathway that functions presynaptically to regulate synaptic architecture and presynaptic differentiation. Phosphorylates and activates mkk-4. Has a role in axonal regrowth following injury and synaptogenesis. Plays a role in modulating polymerization of neuronal microtubules. Also promotes tubulin post-translational modifications that protect microtubules. Plays a role in cilium length regulation, possibly by reducing rab-5 mediated endocytosis, and may also have a role in intraflagellar transport in cilia. Plays a role in the formation of muscle connections, also called muscle arm extensions, between the body wall and the motor axons in the dorsal and ventral cord. Has a role in synapse and axon development, and in axonal regrowth following injury. Its function is as follows. By forming heterooligomers with isoform a, acts as an inhibitor of isoform a activation. Its inhibitory function is independent of its catalytic activity. This chain is Mitogen-activated protein kinase kinase kinase dlk-1 (dlk-1), found in Caenorhabditis elegans.